We begin with the raw amino-acid sequence, 620 residues long: MDSHTLIQALIYLGSAALIVPIAVRLGLGSVLGYLIAGCIIGPWGLRLVTDAESILHFAEIGVVLMLFIIGLELDPQRLWKLRAAVFGGGALQMVICGGLLGLFCMLLGLRWQVAELIGMTLALSSTAIAMQAMNERNLMMTQMGRSAFAVLLFQDIAAIPLVAMIPLLAASSASTTMGAFALSALKVAGALVLVVLLGRYVTRPALRFVARSGLREVFSAVALFLVFGFGLLLEEVGLSMAMGAFLAGVLLASSEYRHALESDIEPFKGLLLGLFFIGVGMSIDFGTLIENPLRIVILLLGFLIIKIAMLWLIARPLQVPNKQRRWFAVLLGQGSEFAFVVFGAAQMANVLEPEWAKSLTLAVALSMAATPILLVILNRLEQSSSEEAREADEIDEEQPRVIIAGFGRFGQITGRLLLSSGVKMVVLDHDPDHIETLRKFGMKVFYGDATRMDLLESAGAAKAEVLINAIDDPQTNLQLTEMVKEHFPHLQIIARARDVDHYIRLRQAGVEKPERETFEGALKTGRLALESLGLGPYEARERADVFRRFNIQMVEEMAMVENDTKARAAVYKRTSAMLSEIITEDREHLSLIQRHGWQGTEEGKHTGNMADEPETKPSS.

A run of 12 helical transmembrane segments spans residues 4 to 24 (HTLIQALIYLGSAALIVPIAV), 26 to 46 (LGLGSVLGYLIAGCIIGPWGL), 54 to 74 (SILHFAEIGVVLMLFIIGLEL), 90 to 110 (GALQMVICGGLLGLFCMLLGL), 114 to 134 (VAELIGMTLALSSTAIAMQAM), 149 to 169 (FAVLLFQDIAAIPLVAMIPLL), 178 to 198 (MGAFALSALKVAGALVLVVLL), 218 to 238 (VFSAVALFLVFGFGLLLEEVG), 270 to 290 (GLLLGLFFIGVGMSIDFGTLI), 294 to 314 (LRIVILLLGFLIIKIAMLWLI), 327 to 347 (WFAVLLGQGSEFAFVVFGAAQ), and 359 to 379 (SLTLAVALSMAATPILLVILN). Residues 399-518 (QPRVIIAGFG…AGVEKPERET (120 aa)) form the RCK N-terminal domain. Positions 597-620 (GWQGTEEGKHTGNMADEPETKPSS) are disordered.

It belongs to the monovalent cation:proton antiporter 2 (CPA2) transporter (TC 2.A.37) family. KefC subfamily. In terms of assembly, homodimer. Interacts with the regulatory subunit KefF.

It is found in the cell inner membrane. Its function is as follows. Pore-forming subunit of a potassium efflux system that confers protection against electrophiles. Catalyzes K(+)/H(+) antiport. The sequence is that of Glutathione-regulated potassium-efflux system protein KefC from Escherichia coli O17:K52:H18 (strain UMN026 / ExPEC).